The sequence spans 327 residues: Mitochondrial coenzyme A transporter SLC25A42 (327 aa).

3 Solcar repeats span residues 34 to 120 (KSVL…YKKL), 132 to 217 (LTPI…LKKL), and 227 to 315 (PYTF…TQIL). 6 helical membrane-spanning segments follow: residues 36-56 (VLNSLTSGALAGAVAKTAVAP), 92-112 (LWRGNSATMVRVIPYAAIQFC), 138-158 (LLAGALAGTTATLLTYPLDLV), 192-209 (GFTPTVLGVIPYAGISFF), 233-253 (LLFGACAGLFGQSSSYPLDVV), and 296-316 (VKGPVAVGISFTTFDLTQILL).

This sequence belongs to the mitochondrial carrier (TC 2.A.29) family.

It is found in the mitochondrion inner membrane. It catalyses the reaction ADP(out) + CoA(in) = ADP(in) + CoA(out). It carries out the reaction 3'-dephospho-CoA(in) + ADP(out) = 3'-dephospho-CoA(out) + ADP(in). The enzyme catalyses adenosine 3',5'-bisphosphate(in) + ADP(out) = adenosine 3',5'-bisphosphate(out) + ADP(in). The catalysed reaction is AMP(in) + ADP(out) = AMP(out) + ADP(in). It catalyses the reaction dADP(in) + ADP(out) = dADP(out) + ADP(in). It carries out the reaction ADP(in) + ATP(out) = ADP(out) + ATP(in). Its function is as follows. Mitochondrial carrier mediating the transport of coenzyme A (CoA) in mitochondria in exchange for intramitochondrial (deoxy)adenine nucleotides and adenosine 3',5'-diphosphate. This is Mitochondrial coenzyme A transporter SLC25A42 (slc25a42) from Xenopus laevis (African clawed frog).